A 60-amino-acid chain; its full sequence is Ixodegrin-like peptide (60 aa).

The signal sequence occupies residues 1–19 (MNAVFIAALLILGTSTFDA). The short motif at 49-51 (RGD) is the Cell attachment site element.

It belongs to the ixodegrin family. In terms of processing, contains 3 disulfide bonds. In terms of tissue distribution, expressed in salivary glands.

The protein resides in the secreted. In terms of biological role, tick salivary platelet aggregation inhibitor that plays an important part in the anti-hemostatic strategy of ticks. Inhibits platelet aggregation induced by ADP, thrombin and thromboxane A2 (TXA2). Blocks platelet adhesion to soluble collagen (most probably through the binding to alpha-2/beta-1 integrin (ITGA2/ITGB1)) and binds to purified glycoprotein IIb/IIIa (ITGA2B/ITGB3) in a dose-dependent manner. In vivo, reduces thrombus weight effectively in a rat arteriovenous shunt model and inhibits thrombosis in a carrageenan-induced mouse tail thrombosis model. The polypeptide is Ixodegrin-like peptide (Ixodes scapularis (Black-legged tick)).